A 433-amino-acid chain; its full sequence is MTILVLGINHKTASVALREKVAFSDEKRLLALKQIKQTQLAECAVILSTCNRTEVYLHNKNVGPQNDEVWLDSCVQWFADIHQVDLEELKSCLYSQQNLQASRHLMRVASGLDSLILGEPQILGQVKQAYQMSEEYYSLHSDIGMMSTELSRLFQKTFATAKRVRTETHIGESAVSVAYAACSLARQIFDSLRNLNILLVGAGETIELVSRHLLRHGVNGLAIANRTLSRAEKLVEKLETTQKIDIFSLDRLSEGLKRADIVITSTGSPHVLISRNLIEQAQQMRHYKPMLIVDIAVPRDVEESAGEIESVYHYTVDDLHNIIQHNINQREQASQQAEHIIQQESADFFEWLKVHQFSNLIRNYRESAEIIRQDLLEKALQALQNGENTEQVLQELSHKLTKKLIHQPTQAMQTMVKAGNTEGLQAFSHAVKS.

Substrate is bound by residues 49–52 (TCNR), serine 114, 119–121 (EPQ), and glutamine 125. Residue cysteine 50 is the Nucleophile of the active site. 201–206 (GAGETI) provides a ligand contact to NADP(+).

Belongs to the glutamyl-tRNA reductase family. In terms of assembly, homodimer.

It catalyses the reaction (S)-4-amino-5-oxopentanoate + tRNA(Glu) + NADP(+) = L-glutamyl-tRNA(Glu) + NADPH + H(+). It participates in porphyrin-containing compound metabolism; protoporphyrin-IX biosynthesis; 5-aminolevulinate from L-glutamyl-tRNA(Glu): step 1/2. In terms of biological role, catalyzes the NADPH-dependent reduction of glutamyl-tRNA(Glu) to glutamate 1-semialdehyde (GSA). In Histophilus somni (strain 2336) (Haemophilus somnus), this protein is Glutamyl-tRNA reductase.